A 550-amino-acid polypeptide reads, in one-letter code: MNQGHPQPDMYYSPHYSTPQYGYGYSTNGAPTTAVSTPMPAPQNVLPVPSALSNQGAMQQPGYSNSSNNGAFDTTGQHNPPGMKPRVTATLWEDEGSLCFQVEARGICVARREDNHMINGTKLLNVAGMTRGRRDGILKSEKVRHVVKIGPMHLKGVWIPYDRALDFANKEKITELLFPLFVHNIGALLYHPSNSNRTSQVMAAAERRKHEGLGGQRPAAPNALPSIGQHHPMMPGLPTGGYVPQSLANGPQSLASTPQPLTNGSQPPMPNGGGMLKRGREEEEDLHRPVSNGHDPMSNMHAMSNGYPQQPPLANVHQPPMQNGGDMLKRGRDEDDEVHRSAHTAHDTMNNMPGSMPGLSNAYAQPLPNVHHQPLANGDGGMLKRGRDEDDDVHRSSPNGHDSAGNFEVKRRKTITSNDSMVSPGGFYTLHNGYGQPGVMNGMSPYKRRDDEAETPRPGPNVHDHLNNFDLKRHKTMETSVPAPQYDAMNRPHSSIGTSPTYAPAPVYDNLARPASTVAASPSYPSAPVYDTGARPPSAISAPRRQQSFG.

The HTH APSES-type domain maps to 86-192 (RVTATLWEDE…HNIGALLYHP (107 aa)). Residues 120–141 (GTKLLNVAGMTRGRRDGILKSE) constitute a DNA-binding region (H-T-H motif). Residues 246–266 (SLANGPQSLASTPQPLTNGSQ) are compositionally biased toward polar residues. Disordered regions lie at residues 246 to 277 (SLANGPQSLASTPQPLTNGSQPPMPNGGGMLK), 371 to 412 (HHQP…VKRR), 447 to 467 (KRRDDEAETPRPGPNVHDHLN), and 527 to 550 (APVYDTGARPPSAISAPRRQQSFG). Basic and acidic residues predominate over residues 385 to 395 (RGRDEDDDVHR). Positions 517-546 (TVAASPSYPSAPVYDTGARPPSAISAPRRQ) are nuclear localization domain.

This sequence belongs to the EFG1/PHD1/stuA family.

Its subcellular location is the nucleus. Its function is as follows. Transcription factor that regulates asexual reproduction. Binds the StuA-response elements (StRE) with the consensus sequence 5'-(A/T)CGCG(T/A)N(A/C)-3' at the promoters of target genes. Differentially regulates the development of macroconidia, microconidia, and chlamydospores. Acts as a positive regulator for the development of macroconidia and as a negative regulator for the development of chlamydospores. Involved in microconidium formation specifically in infected plants. The sequence is that of Cell pattern formation-associated protein STUA from Fusarium oxysporum (Fusarium vascular wilt).